The sequence spans 193 residues: dCTP deaminase (193 aa).

DCTP is bound by residues 110 to 115 (RSSLAR), D128, 136 to 138 (VLE), Y171, K178, and Q182. E138 acts as the Proton donor/acceptor in catalysis.

The protein belongs to the dCTP deaminase family. As to quaternary structure, homotrimer.

It carries out the reaction dCTP + H2O + H(+) = dUTP + NH4(+). Its pathway is pyrimidine metabolism; dUMP biosynthesis; dUMP from dCTP (dUTP route): step 1/2. Its function is as follows. Catalyzes the deamination of dCTP to dUTP. This Escherichia coli (strain K12 / MC4100 / BW2952) protein is dCTP deaminase.